Here is a 292-residue protein sequence, read N- to C-terminus: Porphobilinogen deaminase (292 aa).

Residue Cys-235 is modified to S-(dipyrrolylmethanemethyl)cysteine.

The protein belongs to the HMBS family. In terms of assembly, monomer. The cofactor is dipyrromethane.

The enzyme catalyses 4 porphobilinogen + H2O = hydroxymethylbilane + 4 NH4(+). The protein operates within porphyrin-containing compound metabolism; protoporphyrin-IX biosynthesis; coproporphyrinogen-III from 5-aminolevulinate: step 2/4. In terms of biological role, tetrapolymerization of the monopyrrole PBG into the hydroxymethylbilane pre-uroporphyrinogen in several discrete steps. This is Porphobilinogen deaminase from Acetivibrio thermocellus (strain ATCC 27405 / DSM 1237 / JCM 9322 / NBRC 103400 / NCIMB 10682 / NRRL B-4536 / VPI 7372) (Clostridium thermocellum).